A 439-amino-acid polypeptide reads, in one-letter code: COBRA-like protein 7 (439 aa).

A signal peptide spans 1 to 22 (MDVDQLILFVFVCCLSSRFADA). N-linked (GlcNAc...) asparagine glycosylation is found at N138, N181, N186, N232, N312, and N346. Residue N412 is the site of GPI-anchor amidated asparagine attachment. A propeptide spans 413-439 (GGPDSRVSAAQLIASSCLLLPFIFLIM) (removed in mature form).

It belongs to the COBRA family.

It is found in the cell membrane. Functionally, involved in determining the orientation of cell expansion, probably by playing an important role in cellulose deposition. May act by recruiting cellulose synthesizing complexes to discrete positions on the cell surface. In Oryza sativa subsp. japonica (Rice), this protein is COBRA-like protein 7 (BC1LP1).